We begin with the raw amino-acid sequence, 185 residues long: Ribosome-recycling factor (185 aa).

This sequence belongs to the RRF family.

It is found in the cytoplasm. In terms of biological role, responsible for the release of ribosomes from messenger RNA at the termination of protein biosynthesis. May increase the efficiency of translation by recycling ribosomes from one round of translation to another. This chain is Ribosome-recycling factor, found in Neisseria meningitidis serogroup A / serotype 4A (strain DSM 15465 / Z2491).